Here is an 871-residue protein sequence, read N- to C-terminus: DNA mismatch repair protein MutS (871 aa).

Residue 605–612 (GPNMGGKS) participates in ATP binding. The interval 791 to 840 (PQRPTSASVEQPVDSAKTETAATAEEPQQLSLFPTDEETKPKQPTKKERS) is disordered. The span at 827–840 (EETKPKQPTKKERS) shows a compositional bias: basic and acidic residues.

This sequence belongs to the DNA mismatch repair MutS family.

Functionally, this protein is involved in the repair of mismatches in DNA. It is possible that it carries out the mismatch recognition step. This protein has a weak ATPase activity. This chain is DNA mismatch repair protein MutS, found in Shouchella clausii (strain KSM-K16) (Alkalihalobacillus clausii).